The following is a 344-amino-acid chain: Cysteine proteinase 5 (344 aa).

Residues 1–17 form the signal peptide; the sequence is MKVLSFLCVLLVSVATA. Residues 18–111 constitute a propeptide, activation peptide; that stretch reads KQQFSELQYR…TQEEKVFTTS (94 aa). 3 cysteine pairs are disulfide-bonded: C133-C174, C167-C207, and C265-C333. Residue C136 is part of the active site. The active site involves H272. An N-linked (GlcNAc...) asparagine glycan is attached at N297. N311 is a catalytic residue.

The protein belongs to the peptidase C1 family. Glycosylated; contains GlcNAc-alpha-1-P-Ser residues.

It localises to the lysosome. The chain is Cysteine proteinase 5 (cprE) from Dictyostelium discoideum (Social amoeba).